The following is a 1214-amino-acid chain: Genome polyprotein (1214 aa).

Residues 1–55 enclose the SF3 helicase domain; that stretch reads NKGKTFTSKYVIMTSNTETPVKPTSRRAGAFYRRVMIVDVTNNAVEKWKSDNPGK. Y428 carries the O-(5'-phospho-RNA)-tyrosine modification. The 154-residue stretch at 523–676 folds into the Peptidase C24 domain; that stretch reads GVAHKNAIVS…KLIVPYAKVD (154 aa). Catalysis depends on for 3CLpro activity residues H557, E578, and C640. The region spanning 926–1051 is the RdRp catalytic domain; sequence HDRYCVDYSK…IVPPLISSVM (126 aa).

Specific enzymatic cleavages in vivo yield mature proteins. Pro-Pol is first autocatalytically cleaved, then processes the whole polyprotein. In terms of processing, VPg is uridylylated by the polymerase and is covalently attached to the 5'-end of the polyadenylated genomic and subgenomic RNAs. This uridylylated form acts as a nucleotide-peptide primer for the polymerase.

The catalysed reaction is a ribonucleoside 5'-triphosphate + H2O = a ribonucleoside 5'-diphosphate + phosphate + H(+). The enzyme catalyses RNA(n) + a ribonucleoside 5'-triphosphate = RNA(n+1) + diphosphate. It catalyses the reaction Endopeptidase with a preference for cleavage when the P1 position is occupied by Glu-|-Xaa and the P1' position is occupied by Gly-|-Yaa.. NTPase presumably plays a role in replication. Despite having similarities with helicases, does not seem to display any helicase activity. Its function is as follows. Viral genome-linked protein is covalently linked to the 5'-end of the positive-strand, negative-strand genomic RNAs and subgenomic RNA. Acts as a genome-linked replication primer. May recruit ribosome to viral RNA thereby promoting viral proteins translation. In terms of biological role, protease-polymerase p76 processes the polyprotein: Pro-Pol is first released by autocleavage, then all other proteins are cleaved. Cleaves host translation initiation factor eIF4G1 and eIF4G2 thereby inducing a shutdown of host protein synthesis. This shutdown may not prevent viral mRNA from being translated since viral Vpg replaces the cap. May cleave host polyadenylate-binding protein thereby inhibiting cellular translation. It is also an RNA-directed RNA polymerase which replicates genomic and antigenomic viral RNA by recognizing specific signals. Also transcribes a subgenomic mRNA by initiating RNA synthesis internally on antigenomic RNA. This sgRNA codes for structural proteins. Catalyzes the covalent attachment VPg with viral RNAs. The chain is Genome polyprotein from San Miguel sea lion virus serotype 4 (SMSV-4).